Consider the following 348-residue polypeptide: Bombesin receptor-activated protein C6orf89 homolog (348 aa).

The Cytoplasmic portion of the chain corresponds to 1-58 (MDLAANEISIYDKLSETVDLVRQTGHQCGMSEKAIEKFIRQLLEKNEPQRGPPQYPLL). Residues 59-79 (IAMYKVLLTLGLILFTAYFVI) traverse the membrane as a helical segment. The Extracellular portion of the chain corresponds to 80–348 (QPFSSLAPEP…ICDGTTLSEL (269 aa)).

As to quaternary structure, homodimer. Interacts with BRS3. Interacts (via N-terminus) with SIN3B. Post-translationally, glycosylated.

Its subcellular location is the golgi apparatus membrane. It localises to the cytoplasm. Exhibits histone deacetylase (HDAC) enhancer properties. May play a role in cell cycle progression and wound repair of bronchial epithelial cells. The sequence is that of Bombesin receptor-activated protein C6orf89 homolog from Rattus norvegicus (Rat).